A 144-amino-acid chain; its full sequence is Group IID secretory phospholipase A2 (144 aa).

Residues 1–19 (MRLALLCGLLLAGITATQG) form the signal peptide. Disulfide bonds link cysteine 45–cysteine 137, cysteine 47–cysteine 63, cysteine 62–cysteine 117, cysteine 68–cysteine 144, cysteine 69–cysteine 110, cysteine 78–cysteine 103, and cysteine 96–cysteine 108. 3 residues coordinate Ca(2+): histidine 46, glycine 48, and glycine 50. The active site involves histidine 66. Aspartate 67 is a binding site for Ca(2+). Asparagine 99 carries an N-linked (GlcNAc...) asparagine glycan. Aspartate 111 is a catalytic residue.

Belongs to the phospholipase A2 family. Requires Ca(2+) as cofactor. Highly expressed in secondary lymphoid tissues, spleen and lymph nodes. Expressed at a lesser extent in thymus. Expressed in CD4-positive, IL2RA/CD25-positive, FOXP3-positive Tregs (at protein level). Expressed in myeloid cell subsets resident in spleen and lymph nodes, ITGAX/CD11C-positive dendritic cells and macrophages (at protein level). Enriched in CD4-positive, ITGAM/CD11B-positive dendritic cell subset. Expressed in pulmonary ITGAX/CD11C-positive dendritic cell subset (at protein level).

It localises to the secreted. The protein resides in the cell membrane. It is found in the cytoplasm. The catalysed reaction is a 1,2-diacyl-sn-glycero-3-phosphoethanolamine + H2O = a 1-acyl-sn-glycero-3-phosphoethanolamine + a fatty acid + H(+). It carries out the reaction 1-hexadecanoyl-2-(9Z-octadecenoyl)-sn-glycero-3-phosphoethanolamine + H2O = 1-hexadecanoyl-sn-glycero-3-phosphoethanolamine + (9Z)-octadecenoate + H(+). The enzyme catalyses 1-hexadecanoyl-2-(9Z,12Z-octadecadienoyl)-sn-glycero-3-phosphoethanolamine + H2O = 1-hexadecanoyl-sn-glycero-3-phosphoethanolamine + (9Z,12Z)-octadecadienoate + H(+). It catalyses the reaction 1,2-dihexadecanoyl-sn-glycero-3-phospho-(1'-sn-glycerol) + H2O = 1-hexadecanoyl-sn-glycero-3-phospho-(1'-sn-glycerol) + hexadecanoate + H(+). The catalysed reaction is 1-hexadecanoyl-2-(9Z-octadecenoyl)-sn-glycero-3-phospho-(1'-sn-glycerol) + H2O = 1-hexadecanoyl-sn-glycero-3-phospho-(1'-sn-glycerol) + (9Z)-octadecenoate + H(+). It carries out the reaction a 1,2-diacyl-sn-glycero-3-phosphocholine + H2O = a 1-acyl-sn-glycero-3-phosphocholine + a fatty acid + H(+). The enzyme catalyses 1,2-dihexadecanoyl-sn-glycero-3-phosphocholine + H2O = 1-hexadecanoyl-sn-glycero-3-phosphocholine + hexadecanoate + H(+). It catalyses the reaction 1-hexadecanoyl-2-(9Z-octadecenoyl)-sn-glycero-3-phosphocholine + H2O = 1-hexadecanoyl-sn-glycero-3-phosphocholine + (9Z)-octadecenoate + H(+). The catalysed reaction is 1-hexadecanoyl-2-(9Z,12Z-octadecadienoyl)-sn-glycero-3-phosphocholine + H2O = (9Z,12Z)-octadecadienoate + 1-hexadecanoyl-sn-glycero-3-phosphocholine + H(+). It carries out the reaction 1-hexadecanoyl-2-(4Z,7Z,10Z,13Z,16Z,19Z-docosahexaenoyl)-sn-glycero-3-phosphocholine + H2O = (4Z,7Z,10Z,13Z,16Z,19Z)-docosahexaenoate + 1-hexadecanoyl-sn-glycero-3-phosphocholine + H(+). Functionally, secretory calcium-dependent phospholipase A2 that primarily targets extracellular lipids, exerting anti-inflammatory and immunosuppressive functions. Hydrolyzes the ester bond of the fatty acyl group attached at sn-2 position of phospholipids (phospholipase A2 activity) with preference for phosphatidylethanolamines and phosphatidylglycerols over phosphatidylcholines. In draining lymph nodes, selectively hydrolyzes diacyl and alkenyl forms of phosphatidylethanolamines, releasing omega-3 polyunsaturated fatty acids (PUFAs) such as eicosapentaenoate and docosahexaenoate that are precursors of the anti-inflammatory lipid mediators, resolvins. During the resolution phase of acute inflammation drives docosahexaenoate-derived resolvin D1 synthesis, which suppresses dendritic cell activation and T-helper 1 immune response. May act in an autocrine and paracrine manner. Via a mechanism independent of its catalytic activity, promotes differentiation of regulatory T cells (Tregs) and participates in the maintenance of immune tolerance. May contribute to lipid remodeling of cellular membranes and generation of lipid mediators involved in pathogen clearance. Displays bactericidal activity against Gram-positive bacteria by directly hydrolyzing phospholipids of the bacterial membrane. This Mus musculus (Mouse) protein is Group IID secretory phospholipase A2 (Pla2g2d).